A 194-amino-acid chain; its full sequence is UPF0232 protein in recF-gyrB intergenic region (194 aa).

Acidic residues predominate over residues 1–14; it reads MTGPFDDDGPEEDA. The disordered stretch occupies residues 1–81; sequence MTGPFDDDGP…GPGPDARDPQ (81 aa). Residues 30-52 show a composition bias toward basic and acidic residues; the sequence is DLVRRTLEEARGAARSQGKDVGR.

This sequence belongs to the UPF0232 family.

The sequence is that of UPF0232 protein in recF-gyrB intergenic region from Mycolicibacterium smegmatis (Mycobacterium smegmatis).